A 121-amino-acid chain; its full sequence is Large ribosomal subunit protein bL12 (121 aa).

It belongs to the bacterial ribosomal protein bL12 family. In terms of assembly, homodimer. Part of the ribosomal stalk of the 50S ribosomal subunit. Forms a multimeric L10(L12)X complex, where L10 forms an elongated spine to which 2 to 4 L12 dimers bind in a sequential fashion. Binds GTP-bound translation factors.

Its function is as follows. Forms part of the ribosomal stalk which helps the ribosome interact with GTP-bound translation factors. Is thus essential for accurate translation. The chain is Large ribosomal subunit protein bL12 from Shewanella baltica (strain OS223).